The following is a 151-amino-acid chain: Cytochrome c oxidase-assembly factor COX23, mitochondrial (151 aa).

The N-terminal 10 residues, Met-1–Gln-10, are a transit peptide targeting the mitochondrion. Positions Met-1–Pro-86 are disordered. The span at Thr-7 to Ser-18 shows a compositional bias: polar residues. Positions Asn-19–Pro-51 are enriched in low complexity. The CHCH domain occupies Tyr-101–Arg-143. 2 consecutive short sequence motifs (cx9C motif) follow at residues Cys-104–Cys-114 and Cys-125–Cys-135. 2 cysteine pairs are disulfide-bonded: Cys-104–Cys-135 and Cys-114–Cys-125.

This sequence belongs to the COX23 family.

Its subcellular location is the cytoplasm. It is found in the mitochondrion intermembrane space. Required for the assembly of cytochrome c oxidase. In Saccharomyces cerevisiae (strain ATCC 204508 / S288c) (Baker's yeast), this protein is Cytochrome c oxidase-assembly factor COX23, mitochondrial (COX23).